The primary structure comprises 715 residues: Palmitoyltransferase ZDHHC5 (715 aa).

Over 1-13 the chain is Cytoplasmic; that stretch reads MPAESGKRFKPSK. Residues 14–34 traverse the membrane as a helical segment; sequence YVPVSAAAIFLVGATTLFFAF. Residues 35-38 are Extracellular-facing; the sequence is TCPG. Residues 39–59 form a helical membrane-spanning segment; that stretch reads LSLYVSPAVPIYNAIMFLFVL. The Cytoplasmic segment spans residues 60–148; sequence ANFSMATFMD…NCIGRRNYRY (89 aa). The residue at position 91 (Tyr91) is a Phosphotyrosine. Residues 104-154 form the DHHC domain; sequence KWCATCRFYRPPRCSHCSVCDNCVEEFDHHCPWVNNCIGRRNYRYFFLFLL. Residue Cys134 is the S-palmitoyl cysteine intermediate of the active site. Residues 149 to 169 form a helical membrane-spanning segment; it reads FFLFLLSLTAHIMGVFGFGLL. The Extracellular segment spans residues 170 to 191; sequence YVLYHIEELSGVRTAVTMAVMC. Residues 192–212 form a helical membrane-spanning segment; sequence VAGLFFIPVAGLTGFHVVLVA. The Cytoplasmic segment spans residues 213–715; sequence RGRTTNEQVT…VGGTTYEISV (503 aa). Position 247 is a phosphoserine (Ser247). The disordered stretch occupies residues 289-715; it reads GELRRTKSKG…VGGTTYEISV (427 aa). A Phosphothreonine modification is found at Thr294. Phosphoserine is present on residues Ser296 and Ser299. Thr303 carries the post-translational modification Phosphothreonine. Ser345 is subject to Phosphoserine. Phosphothreonine occurs at positions 348 and 350. The span at 359–373 shows a compositional bias: low complexity; that stretch reads SSSSTSAAMPHSSSA. Residues Ser380, Ser398, Ser406, and Ser409 each carry the phosphoserine modification. Thr411 carries the phosphothreonine modification. Ser415, Ser425, Ser429, and Ser432 each carry phosphoserine. Residues 422–432 show a composition bias toward low complexity; the sequence is SSGSRSSSLKS. Residue Thr436 is modified to Phosphothreonine. Residues 442–478 are compositionally biased toward polar residues; it reads QLQSIRSEGTTSTSYKSLANQTRNGSLSYDSLLTPSD. Phosphoserine is present on residues Ser529 and Ser554. Position 617 is an omega-N-methylarginine (Arg617). Ser621 bears the Phosphoserine mark. Residue Thr659 is modified to Phosphothreonine. Positions 666–677 are enriched in polar residues; the sequence is LKTTYSKSNGQP. Phosphoserine occurs at positions 684 and 694. Arg697 is subject to Omega-N-methylarginine.

The protein belongs to the DHHC palmitoyltransferase family. ERF2/ZDHHC9 subfamily.

Its subcellular location is the cell membrane. The enzyme catalyses L-cysteinyl-[protein] + hexadecanoyl-CoA = S-hexadecanoyl-L-cysteinyl-[protein] + CoA. Its function is as follows. Palmitoyltransferase that catalyzes the addition of palmitate onto various protein substrates such as CTNND2, CD36, GSDMD, NLRP3, NOD1, NOD2, STAT3 and S1PR1 thus plays a role in various biological processes including cell adhesion, inflammation, fatty acid uptake, bacterial sensing or cardiac functions. Plays an important role in the regulation of synapse efficacy by mediating palmitoylation of delta-catenin/CTNND2, thereby increasing synaptic delivery and surface stabilization of alpha-amino-3-hydroxy-5-methyl-4-isoxazole propionic acid receptors (AMPARs). Under basal conditions, remains at the synaptic membrane through FYN-mediated phosphorylation that prevents association with endocytic proteins. Neuronal activity enhances the internalization and trafficking of DHHC5 from spines to dendritic shafts where it palmitoylates delta-catenin/CTNND2. Regulates cell adhesion at the plasma membrane by palmitoylating GOLGA7B and DSG2. Plays a role in innate immune response by mediating the palmitoylation of NOD1 and NOD2 and their proper recruitment to the bacterial entry site and phagosomes. Also participates in fatty acid uptake by palmitoylating CD36 and thereby targeting it to the plasma membrane. Upon binding of fatty acids to CD36, gets phosphorylated by LYN leading to inactivation and subsequent CD36 caveolar endocytosis. Controls oligodendrocyte development by catalyzing STAT3 palmitoylation. Acts as a regulator of inflammatory response by mediating palmitoylation of NLRP3 and GSDMD. Palmitoylates NLRP3 to promote inflammasome assembly and activation. Activates pyroptosis by catalyzing palmitoylation of gasdermin-D (GSDMD), thereby promoting membrane translocation and pore formation of GSDMD. The chain is Palmitoyltransferase ZDHHC5 (ZDHHC5) from Pan troglodytes (Chimpanzee).